The following is a 177-amino-acid chain: Embryogenesis-like protein (177 aa).

Positions 98–118 form a coiled coil; sequence VDEINLKFAEAREEIEMAMDA.

Interacts with HAG1/GCN5. As to expression, expressed in flowers, leaves, stems and siliques.

It localises to the nucleus. Activates gene expression by recruiting HAG1/GCN5 and triggering subsequent histone H3 acetylation of target genes promoters. The chain is Embryogenesis-like protein from Arabidopsis thaliana (Mouse-ear cress).